Here is a 121-residue protein sequence, read N- to C-terminus: Protein PilH (121 aa).

Residues 3-119 form the Response regulatory domain; it reads RILIVDDSPT…TLLKTINAVL (117 aa). Position 52 is a 4-aspartylphosphate (Asp-52).

In terms of biological role, may be a part of a signal-transduction system that regulates twitching motility by controlling pilus function (extension and retraction). The chain is Protein PilH (pilH) from Pseudomonas aeruginosa (strain ATCC 15692 / DSM 22644 / CIP 104116 / JCM 14847 / LMG 12228 / 1C / PRS 101 / PAO1).